Here is an 82-residue protein sequence, read N- to C-terminus: Protein C2 (82 aa).

The sequence is that of Protein C2 (C2) from Sterkiella nova (Ciliate).